The chain runs to 271 residues: Insulin-like growth factor-binding protein 5 (271 aa).

A signal peptide spans 1-19; it reads MVISVVLLLLAAYAVPAQG. One can recognise an IGFBP N-terminal domain in the interval 22-102; it reads SFVHCEPCDE…LHGRGVCLNE (81 aa). 6 disulfides stabilise this stretch: Cys-26/Cys-52, Cys-29/Cys-54, Cys-37/Cys-55, Cys-44/Cys-58, Cys-66/Cys-79, and Cys-73/Cys-99. Over residues 109 to 121 the composition is skewed to basic and acidic residues; that stretch reads TKIERDSREHEEP. The tract at residues 109 to 129 is disordered; that stretch reads TKIERDSREHEEPTTSEMAEE. Ser-115 is modified (phosphoserine). Residues 188 to 262 enclose the Thyroglobulin type-1 domain; sequence QGPCRRHMEA…MEYVDGDFQC (75 aa). Intrachain disulfides connect Cys-191-Cys-218, Cys-229-Cys-240, and Cys-242-Cys-262.

Interacts with IGF1; this interaction enhances the growth stimulatory effects of IGF1 on fibroblasts. Interacts with CAV1; this interaction allows trafficking of IGFBP5 from the plasma membrane to the nucleus. Interacts with NCL; this interaction is necessary for IGFBP5 localization to the nucleus. Most abundant in kidney, uterus and gastrocnemius muscle.

It localises to the secreted. It is found in the cytoplasm. Its subcellular location is the nucleus. Multifunctional protein that plays a critical role in regulating the availability of IGFs to their receptors and thereby regulates IGF-mediated cellular processes including proliferation, differentiation, and apoptosis in a cell-type specific manner. Increases the cell proliferation of osteoblasts, intestinal smooth muscle cells and neuroblastoma cells. Enhances adhesion and survival of epithelial cells but decreases adhesion of mesenchymal cells. Once secreted, acts as a major mediator of mTORC1-dependent feedback inhibition of IGF1 signaling. Also plays a role in the induction of extracellular matrix (ECM) production and deposition independently of its nuclear translocation and binding to IGFs. Acts itself as a growth factor that can act independently of IGFs to regulate bone formation. Acts as a ligand for the ROR1 receptor which triggers formation of ROR1/HER2 heterodimer to enhance CREB oncogenic signaling. The sequence is that of Insulin-like growth factor-binding protein 5 (Igfbp5) from Mus musculus (Mouse).